The chain runs to 261 residues: Succinate dehydrogenase [ubiquinone] iron-sulfur subunit, mitochondrial (261 aa).

One can recognise a 2Fe-2S ferredoxin-type domain in the interval F31–M122. [2Fe-2S] cluster-binding residues include C82, C87, C90, and C102. The region spanning D164–Y194 is the 4Fe-4S ferredoxin-type domain. Residues C174, C177, and C180 each coordinate [4Fe-4S] cluster. C184 is a binding site for [3Fe-4S] cluster. W189 contacts a ubiquinone. Residues C231 and C237 each coordinate [3Fe-4S] cluster. C241 serves as a coordination point for [4Fe-4S] cluster.

It belongs to the succinate dehydrogenase/fumarate reductase iron-sulfur protein family. Component of complex II composed of four subunits: a flavoprotein (FP), an iron-sulfur protein (IP), and a cytochrome b composed of a large and a small subunit. [2Fe-2S] cluster serves as cofactor. [3Fe-4S] cluster is required as a cofactor. Requires [4Fe-4S] cluster as cofactor.

The protein localises to the mitochondrion inner membrane. The catalysed reaction is a quinone + succinate = fumarate + a quinol. It functions in the pathway carbohydrate metabolism; tricarboxylic acid cycle; fumarate from succinate (eukaryal route): step 1/1. Functionally, iron-sulfur protein (IP) subunit of succinate dehydrogenase (SDH) that is involved in complex II of the mitochondrial electron transport chain and is responsible for transferring electrons from succinate to ubiquinone (coenzyme Q). The chain is Succinate dehydrogenase [ubiquinone] iron-sulfur subunit, mitochondrial (SDH2) from Eremothecium gossypii (strain ATCC 10895 / CBS 109.51 / FGSC 9923 / NRRL Y-1056) (Yeast).